The chain runs to 453 residues: MGVILLNSNNNNHEQQRSLDEINNTINFNHNDSASQKFLAFLGPGLLVAVGYMDPGNWITSMQGGAQYGYTLLFIILISSLSAMLLQSMTVRLGIATGMDLAQMTRHFLNKPVAIMFWIIAELAIIATDIAEVIGSAIALDLIFGIPLIVGALITVFDVFLLLFIMKFGFRKIEAIVGTLIFTVLAIFVFEVYISSPHIIDMLNGFVPHKEIITNQGILYIALGIIGATIMPHNLYLHSSIVQSRKYDRHSIHEKAQAIKYATIDSNIQLSIAFVVNCLLLTLGAALFFGTKTEDLGGFYDLYLALKTEPALGATLGGIMSTLFAVALLASGQNSTITGTLAGQIVMEGFLKLSIPNWLRRLITRSLAVIPVIICLIVFKGNTEKIEQLLVFSQVFLSIALPFSLIPLQLATSNQNLMGPFKNKTWINIISWLLIIVLSGLNVYLIIQTFQEL.

11 consecutive transmembrane segments (helical) span residues 39-59, 66-86, 114-134, 146-166, 175-195, 217-237, 270-290, 310-330, 362-382, 388-408, and 427-447; these read LAFL…GNWI, AQYG…AMLL, AIMF…AEVI, IPLI…LFIM, AIVG…VYIS, GILY…NLYL, LSIA…LFFG, PALG…ALLA, LITR…FKGN, QLLV…LIPL, and INII…YLII.

The protein belongs to the NRAMP family.

It is found in the cell membrane. Its function is as follows. H(+)-stimulated, divalent metal cation uptake system. The polypeptide is Divalent metal cation transporter MntH (Staphylococcus epidermidis (strain ATCC 12228 / FDA PCI 1200)).